A 401-amino-acid chain; its full sequence is Transcriptional regulator Myc-2 (401 aa).

Thr58 is a glycosylation site (O-linked (GlcNAc) threonine). The short motif at 76 to 84 (EMVSEFLGD) is the 9aaTAD element. Disordered stretches follow at residues 177–251 (SSKS…SRYP) and 286–325 (LESSSSNNSSSNRQGKQRKCTSPRTSDSEDNDKRRTHNVL). Over residues 205–230 (DSEDEEEEEEEEEEEEEEEEEEEEID) the composition is skewed to acidic residues. Residues 233–247 (TVEKRQKRNEAEVSD) show a composition bias toward basic and acidic residues. Over residues 288 to 297 (SSSSNNSSSN) the composition is skewed to low complexity. Residues 317 to 369 (DKRRTHNVLERQRRNELKLSFFALRDEIPEVANNEKAAKVVILKKATECIHSM) enclose the bHLH domain. The leucine-zipper stretch occupies residues 376 to 397 (LLSIKEQLRRKSEQLKHRLQQL).

Efficient DNA binding requires dimerization with another bHLH protein. Binds DNA as a heterodimer with MAX.

Its subcellular location is the nucleus. Its function is as follows. Transcription factor that binds DNA in a non-specific manner, yet also specifically recognizes the core sequence 5'-CAC[GA]TG-3'. Activates the transcription of growth-related genes. The chain is Transcriptional regulator Myc-2 (mycb) from Cyprinus carpio (Common carp).